A 135-amino-acid chain; its full sequence is Small ribosomal subunit protein uS12 (135 aa).

Asp-89 is subject to 3-methylthioaspartic acid. The tract at residues 106 to 135 is disordered; it reads GVANRRQSRSKYGAKRPKAGAAQATKGGKK. Residues 111–123 are compositionally biased toward basic residues; it reads RQSRSKYGAKRPK. Residues 124–135 are compositionally biased toward low complexity; the sequence is AGAAQATKGGKK.

It belongs to the universal ribosomal protein uS12 family. Part of the 30S ribosomal subunit. Contacts proteins S8 and S17. May interact with IF1 in the 30S initiation complex.

With S4 and S5 plays an important role in translational accuracy. Functionally, interacts with and stabilizes bases of the 16S rRNA that are involved in tRNA selection in the A site and with the mRNA backbone. Located at the interface of the 30S and 50S subunits, it traverses the body of the 30S subunit contacting proteins on the other side and probably holding the rRNA structure together. The combined cluster of proteins S8, S12 and S17 appears to hold together the shoulder and platform of the 30S subunit. The polypeptide is Small ribosomal subunit protein uS12 (Hydrogenobaculum sp. (strain Y04AAS1)).